Consider the following 977-residue polypeptide: Zinc finger CCCH domain-containing protein 7B (977 aa).

3 TPR repeats span residues M1–E27, V36–A69, and C82–S115. S217 bears the Phosphoserine mark. Positions S248–S256 match the LD motif; interaction with NSP3 motif. Phosphoserine is present on residues S364 and S367. The tract at residues F365 to C403 is disordered. 3 consecutive C3H1-type zinc fingers follow at residues L484 to E508, V616 to I638, and P754 to E782. The segment at Y842–H866 adopts a C2H2-type zinc-finger fold. A C3H1-type 4 zinc finger spans residues M886–E914.

In terms of assembly, (Microbial infection) Interacts (via LD motif) with rotavirus A NSP3 (via the coiled-coil region).

Its subcellular location is the nucleus. Its function is as follows. May be a specific regulator of miRNA biogenesis. Binds to microRNAs MIR7-1, MIR16-2 and MIR29A hairpins recognizing the 'ATA(A/T)' motif in the apical loop. This chain is Zinc finger CCCH domain-containing protein 7B (ZC3H7B), found in Homo sapiens (Human).